Consider the following 315-residue polypeptide: Secreted frizzled-related protein 5 (315 aa).

Residues 1–27 (MRAAAGGARAAVLALLLGALHGAPARG) form the signal peptide. Positions 46 to 163 (SKPPQCLDIP…PLDNDLCIAV (118 aa)) constitute an FZ domain. Cystine bridges form between Cys-51-Cys-114, Cys-61-Cys-107, Cys-98-Cys-133, Cys-122-Cys-160, Cys-126-Cys-150, Cys-179-Cys-251, Cys-182-Cys-253, and Cys-196-Cys-301. The region spanning 179–301 (CAQCEMEHSA…AVKFMFSYPC (123 aa)) is the NTR domain.

Belongs to the secreted frizzled-related protein (sFRP) family. In terms of tissue distribution, strongly expressed in the retinal pigment epithelium (RPE). Weak expression in retina, brain, heart, liver, kidney, testis and muscle.

Its subcellular location is the secreted. Soluble frizzled-related proteins (sFRPS) function as modulators of Wnt signaling through direct interaction with Wnts. They have a role in regulating cell growth and differentiation in specific cell types. SFRP5 may be involved in determining the polarity of photoreceptor, and perhaps other, cells in the retina. Inhibits Wnt8 signaling, in vitro. This is Secreted frizzled-related protein 5 (SFRP5) from Bos taurus (Bovine).